Reading from the N-terminus, the 334-residue chain is Formamidase (334 aa).

In terms of domain architecture, CN hydrolase spans 14 to 260 (MLMGLVQYPV…WEIVTAEVFP (247 aa)). The active-site Proton acceptor is Glu60. Lys133 functions as the Proton donor in the catalytic mechanism. Cys166 acts as the Nucleophile in catalysis.

The protein belongs to the carbon-nitrogen hydrolase superfamily. Aliphatic amidase family.

The enzyme catalyses formamide + H2O = formate + NH4(+). In terms of biological role, is an aliphatic amidase with a restricted substrate specificity, as it only hydrolyzes formamide. This Nitratidesulfovibrio vulgaris (strain DP4) (Desulfovibrio vulgaris) protein is Formamidase.